The primary structure comprises 359 residues: Peptide chain release factor 1 (359 aa).

Gln236 is modified (N5-methylglutamine). Positions 288 to 307 are disordered; it reads QDEQDAERKSTIGTGDRSER. Residues 293 to 307 are compositionally biased toward basic and acidic residues; it reads AERKSTIGTGDRSER.

Belongs to the prokaryotic/mitochondrial release factor family. In terms of processing, methylated by PrmC. Methylation increases the termination efficiency of RF1.

The protein resides in the cytoplasm. Peptide chain release factor 1 directs the termination of translation in response to the peptide chain termination codons UAG and UAA. This Streptococcus gordonii (strain Challis / ATCC 35105 / BCRC 15272 / CH1 / DL1 / V288) protein is Peptide chain release factor 1 (prfA).